A 247-amino-acid polypeptide reads, in one-letter code: MSVPPPPKEDLIKPNPPKSESAVSGFNWWRRTFQYKTGLGLTPEEETQYENDYKFVLQRKQCSKCYEYRDWLLNYSPTVIFMTQQIAKLNNKNTNADVFKFDESKIICDVCPDWKSGGFHPDLGILICQNRIKDKWHLEDTLAHELVHYFDNLKWEVDWLNLRHHACSEIRASSLSGECRFFQEFARRGFNTGFKVDRGHQACVKRRAAISVSGNPNCRDKEHAERVVDEVWDSCFNDTRPFDEIYR.

Residues 1 to 21 are disordered; the sequence is MSVPPPPKEDLIKPNPPKSES. His144 lines the a divalent metal cation pocket. Glu145 is a catalytic residue. His148 contacts a divalent metal cation.

It belongs to the peptidase M76 family.

Its subcellular location is the mitochondrion inner membrane. Has a dual role in the assembly of mitochondrial ATPase. Acts as a protease that removes N-terminal residues of mitochondrial ATPase CF(0) subunit 6 at the intermembrane space side. Also involved in the correct assembly of the membrane-embedded ATPase CF(0) particle, probably mediating association of subunit 6 with the subunit 9 ring. This is Mitochondrial inner membrane protease ATP23 (ATP23) from Kluyveromyces lactis (strain ATCC 8585 / CBS 2359 / DSM 70799 / NBRC 1267 / NRRL Y-1140 / WM37) (Yeast).